Here is a 374-residue protein sequence, read N- to C-terminus: UDP-N-acetylglucosamine--N-acetylmuramyl-(pentapeptide) pyrophosphoryl-undecaprenol N-acetylglucosamine transferase (374 aa).

UDP-N-acetyl-alpha-D-glucosamine-binding positions include 13–15 (TGG), N124, R165, S193, and Q294.

Belongs to the glycosyltransferase 28 family. MurG subfamily.

It is found in the cell inner membrane. It catalyses the reaction di-trans,octa-cis-undecaprenyl diphospho-N-acetyl-alpha-D-muramoyl-L-alanyl-D-glutamyl-meso-2,6-diaminopimeloyl-D-alanyl-D-alanine + UDP-N-acetyl-alpha-D-glucosamine = di-trans,octa-cis-undecaprenyl diphospho-[N-acetyl-alpha-D-glucosaminyl-(1-&gt;4)]-N-acetyl-alpha-D-muramoyl-L-alanyl-D-glutamyl-meso-2,6-diaminopimeloyl-D-alanyl-D-alanine + UDP + H(+). It participates in cell wall biogenesis; peptidoglycan biosynthesis. Cell wall formation. Catalyzes the transfer of a GlcNAc subunit on undecaprenyl-pyrophosphoryl-MurNAc-pentapeptide (lipid intermediate I) to form undecaprenyl-pyrophosphoryl-MurNAc-(pentapeptide)GlcNAc (lipid intermediate II). The sequence is that of UDP-N-acetylglucosamine--N-acetylmuramyl-(pentapeptide) pyrophosphoryl-undecaprenol N-acetylglucosamine transferase from Sinorhizobium medicae (strain WSM419) (Ensifer medicae).